We begin with the raw amino-acid sequence, 534 residues long: UDP-glucuronosyltransferase 2A3 (534 aa).

A signal peptide spans 1-18; it reads MVSEKCVAAFFLLQLCWA. At 19–493 the chain is on the extracellular side; that stretch reads GCGFCSKVLV…SWFQYHSLDV (475 aa). The N-linked (GlcNAc...) asparagine glycan is linked to Asn-102. Residue Lys-135 is modified to N6-succinyllysine. N-linked (GlcNAc...) asparagine glycosylation occurs at Asn-204. Residues 494–514 form a helical membrane-spanning segment; it reads IGFLLLCVVTLTFIITKFCLF. The Cytoplasmic segment spans residues 515–534; sequence VCQKLYMKESKKMGNRKKKN.

It belongs to the UDP-glycosyltransferase family. In terms of tissue distribution, highly expressed in liver, with lower levels in duodenum and jejunum.

It is found in the membrane. The enzyme catalyses glucuronate acceptor + UDP-alpha-D-glucuronate = acceptor beta-D-glucuronoside + UDP + H(+). Its function is as follows. UDP-glucuronosyltransferases catalyze phase II biotransformation reactions in which lipophilic substrates are conjugated with glucuronic acid to increase water solubility and enhance excretion. They are of major importance in the conjugation and subsequent elimination of potentially toxic xenobiotics and endogenous compounds. The polypeptide is UDP-glucuronosyltransferase 2A3 (Ugt2a3) (Mus musculus (Mouse)).